The primary structure comprises 481 residues: Glutamate mutase epsilon subunit (481 aa).

Arg67 lines the L-glutamate pocket. Position 69 (Gly69) interacts with adenosylcob(III)alamin. Arg99 contributes to the L-glutamate binding site. Position 122 (Asn122) interacts with adenosylcob(III)alamin. Residues Arg148–His149, Glu170, and Tyr176 contribute to the L-glutamate site. An adenosylcob(III)alamin-binding site is contributed by Pro179. Tyr180 is an L-glutamate binding site. Positions 296, 325, 329, and 333 each coordinate adenosylcob(III)alamin.

Belongs to the methylaspartate mutase GlmE subunit family. As to quaternary structure, heterotetramer composed of 2 epsilon subunits (GlmE) and 2 sigma subunits (GlmS). GlmE exists as a homodimer and GlmS as a monomer. The cofactor is adenosylcob(III)alamin.

It catalyses the reaction (2S,3S)-3-methyl-L-aspartate = L-glutamate. It participates in amino-acid degradation; L-glutamate degradation via mesaconate pathway; acetate and pyruvate from L-glutamate: step 1/4. Functionally, catalyzes the carbon skeleton rearrangement of L-glutamate to L-threo-3-methylaspartate ((2S,3S)-3-methylaspartate). The sequence is that of Glutamate mutase epsilon subunit from Escherichia coli O157:H7.